A 176-amino-acid chain; its full sequence is Ribosome maturation factor RimM (176 aa).

Residues 93–168 (DDEVYIEDIL…TIRITPPPGL (76 aa)) form the PRC barrel domain.

This sequence belongs to the RimM family. In terms of assembly, binds ribosomal protein uS19.

The protein resides in the cytoplasm. In terms of biological role, an accessory protein needed during the final step in the assembly of 30S ribosomal subunit, possibly for assembly of the head region. Essential for efficient processing of 16S rRNA. May be needed both before and after RbfA during the maturation of 16S rRNA. It has affinity for free ribosomal 30S subunits but not for 70S ribosomes. This chain is Ribosome maturation factor RimM, found in Oleidesulfovibrio alaskensis (strain ATCC BAA-1058 / DSM 17464 / G20) (Desulfovibrio alaskensis).